Consider the following 225-residue polypeptide: Germin-like protein 3-1 (225 aa).

An N-terminal signal peptide occupies residues 1-22 (MRAAVAHRILLSLALFAVLCRC). Cys-31 and Cys-51 are joined by a disulfide. Residues 65 to 216 (SALSRATNPA…AFKITGQDVQ (152 aa)) form the Cupin type-1 domain. An N-linked (GlcNAc...) asparagine glycan is attached at Asn-81. Mn(2+)-binding residues include His-115, His-117, Glu-122, and His-161.

The protein belongs to the germin family. Oligomer (believed to be a pentamer but probably hexamer).

The protein resides in the secreted. Its subcellular location is the extracellular space. The protein localises to the apoplast. May play a role in plant defense. Probably has no oxalate oxidase activity even if the active site is conserved. This chain is Germin-like protein 3-1, found in Oryza sativa subsp. japonica (Rice).